The following is an 804-amino-acid chain: Probable phosphoketolase (804 aa).

The protein belongs to the XFP family. Thiamine diphosphate serves as cofactor.

The sequence is that of Probable phosphoketolase from Mycolicibacterium paratuberculosis (strain ATCC BAA-968 / K-10) (Mycobacterium paratuberculosis).